The primary structure comprises 95 residues: MIVLQAYIKVKPEKREEFLSEAQSLVQHSRAEEGNAQYDLFEKVGEENTFVMLEKWKDEAAMKFHNETAHFQGFVAKGKELLSAPLDVVRTELSE.

One can recognise an ABM domain in the interval 2–93 (IVLQAYIKVK…APLDVVRTEL (92 aa)). Ser24 carries the phosphoserine modification.

The protein belongs to the LsrG family.

Its function is as follows. Putative monooxygenase that may contribute to the degradation of aromatic compounds. In Bacillus subtilis (strain 168), this protein is Putative monooxygenase YcnE (ycnE).